Here is a 529-residue protein sequence, read N- to C-terminus: Sodium/hydrogen exchanger 4 (529 aa).

Residues Met1–Gln19 are Cytoplasmic-facing. The helical transmembrane segment at Val20–Leu40 threads the bilayer. The Vacuolar portion of the chain corresponds to Glu41–Trp45. The helical transmembrane segment at Val46–Ile66 threads the bilayer. The Cytoplasmic portion of the chain corresponds to Ser67–His73. The segment at residues Ile74–Ala94 is an intramembrane region (helical). Topologically, residues Gly95–Ser112 are cytoplasmic. Residues Phe113–Phe133 form a helical membrane-spanning segment. Over Pro134 to Pro171 the chain is Vacuolar. The chain crosses the membrane as a helical span at residues Leu172 to Phe192. The Cytoplasmic segment spans residues Asn193 to Asn214. Residues Phe215–Phe235 traverse the membrane as a helical segment. The Vacuolar portion of the chain corresponds to Val236 to Glu250. A helical membrane pass occupies residues Leu251 to Leu267. Residues Phe268–Ile273 lie on the Cytoplasmic side of the membrane. A helical membrane pass occupies residues Leu274 to Val291. At Thr292–His301 the chain is on the vacuolar side. The chain crosses the membrane as a helical span at residues Val302–Ala322. Residues Leu323 to Ser342 are Cytoplasmic-facing. A helical membrane pass occupies residues Gly343–Leu363. At Thr364–Lys380 the chain is on the vacuolar side. An N-linked (GlcNAc...) asparagine glycan is attached at Asn374. A helical transmembrane segment spans residues His381 to Phe401. Residues Lys402 to Asn415 are Cytoplasmic-facing. A helical transmembrane segment spans residues Ala416–Leu436. Residues Thr437–Cys529 lie on the Vacuolar side of the membrane.

Belongs to the monovalent cation:proton antiporter 1 (CPA1) transporter (TC 2.A.36) family. Expressed at very low levels in roots and shoots.

The protein resides in the vacuole membrane. The catalysed reaction is Na(+)(in) + H(+)(out) = Na(+)(out) + H(+)(in). It catalyses the reaction K(+)(in) + H(+)(out) = K(+)(out) + H(+)(in). Functionally, may act in low affinity electroneutral exchange of protons for cations such as Na(+) or K(+) across membranes. May also exchange Li(+) and Cs(+) with a lower affinity. The protein is Sodium/hydrogen exchanger 4 (NHX4) of Arabidopsis thaliana (Mouse-ear cress).